Consider the following 282-residue polypeptide: Succinate dehydrogenase [ubiquinone] iron-sulfur subunit, mitochondrial (282 aa).

The N-terminal 26 residues, 1–26, are a transit peptide targeting the mitochondrion; sequence MAAVVFSLRRSGPVLRLSGALQVSRG. The 2Fe-2S ferredoxin-type domain occupies 42 to 135; sequence KKFAIYRWDP…VSKIYPLPHM (94 aa). [2Fe-2S] cluster-binding residues include C95, C100, C103, and C115. Residues 178-208 enclose the 4Fe-4S ferredoxin-type domain; that stretch reads DRDKLDGLYECILCACCSTSCPSYWWNADKY. Residues C188, C191, and C194 each contribute to the [4Fe-4S] cluster site. [3Fe-4S] cluster is bound at residue C198. W203 contacts a ubiquinone. [3Fe-4S] cluster-binding residues include C245 and C251. C255 lines the [4Fe-4S] cluster pocket.

The protein belongs to the succinate dehydrogenase/fumarate reductase iron-sulfur protein family. In terms of assembly, component of complex II composed of four subunits: the flavoprotein (FP) sdha, iron-sulfur protein (IP) sdhb, and a cytochrome b composed of sdhc and sdhd. [2Fe-2S] cluster is required as a cofactor. [3Fe-4S] cluster serves as cofactor. It depends on [4Fe-4S] cluster as a cofactor.

The protein localises to the mitochondrion inner membrane. The enzyme catalyses a quinone + succinate = fumarate + a quinol. The catalysed reaction is (R)-malate + a quinone = enol-oxaloacetate + a quinol. It catalyses the reaction (S)-malate + a quinone = enol-oxaloacetate + a quinol. Its pathway is carbohydrate metabolism; tricarboxylic acid cycle; fumarate from succinate (eukaryal route): step 1/1. With respect to regulation, enol-oxaloacetate inhibits the succinate dehydrogenase activity. Functionally, iron-sulfur protein (IP) subunit of the succinate dehydrogenase complex (mitochondrial respiratory chain complex II), responsible for transferring electrons from succinate to ubiquinone (coenzyme Q). SDH also oxidizes malate to the non-canonical enol form of oxaloacetate, enol-oxaloacetate. Enol-oxaloacetate, which is a potent inhibitor of the succinate dehydrogenase activity, is further isomerized into keto-oxaloacetate. This is Succinate dehydrogenase [ubiquinone] iron-sulfur subunit, mitochondrial (sdhb) from Xenopus laevis (African clawed frog).